We begin with the raw amino-acid sequence, 328 residues long: Ketol-acid reductoisomerase (NADP(+)) (328 aa).

The region spanning 2–182 (AKIYRDGDAS…GATRAGVIET (181 aa)) is the KARI N-terminal Rossmann domain. Residues 25-28 (YGIQ), Arg-48, Ser-53, and 83-86 (DMEQ) each bind NADP(+). His-108 is a catalytic residue. An NADP(+)-binding site is contributed by Gly-134. In terms of domain architecture, KARI C-terminal knotted spans 183–328 (TFAEETETDL…AEMRKLLFGP (146 aa)). Mg(2+) contacts are provided by Asp-191, Glu-195, Glu-227, and Glu-231. Ser-252 lines the substrate pocket.

Belongs to the ketol-acid reductoisomerase family. Requires Mg(2+) as cofactor.

The catalysed reaction is (2R)-2,3-dihydroxy-3-methylbutanoate + NADP(+) = (2S)-2-acetolactate + NADPH + H(+). The enzyme catalyses (2R,3R)-2,3-dihydroxy-3-methylpentanoate + NADP(+) = (S)-2-ethyl-2-hydroxy-3-oxobutanoate + NADPH + H(+). Its pathway is amino-acid biosynthesis; L-isoleucine biosynthesis; L-isoleucine from 2-oxobutanoate: step 2/4. It participates in amino-acid biosynthesis; L-valine biosynthesis; L-valine from pyruvate: step 2/4. In terms of biological role, involved in the biosynthesis of branched-chain amino acids (BCAA). Catalyzes an alkyl-migration followed by a ketol-acid reduction of (S)-2-acetolactate (S2AL) to yield (R)-2,3-dihydroxy-isovalerate. In the isomerase reaction, S2AL is rearranged via a Mg-dependent methyl migration to produce 3-hydroxy-3-methyl-2-ketobutyrate (HMKB). In the reductase reaction, this 2-ketoacid undergoes a metal-dependent reduction by NADPH to yield (R)-2,3-dihydroxy-isovalerate. The sequence is that of Ketol-acid reductoisomerase (NADP(+)) from Pyrobaculum calidifontis (strain DSM 21063 / JCM 11548 / VA1).